The sequence spans 652 residues: Zinc finger protein 503 (652 aa).

A compositionally biased stretch (polar residues) spans 1–11; it reads MSTAPSLSALR. The segment at 1–72 is disordered; the sequence is MSTAPSLSAL…HAVPPSDPLR (72 aa). The span at 16–32 shows a compositional bias: gly residues; that stretch reads SGGGGGGGGGGGSGGGS. Phosphoserine is present on Ser107. Disordered regions lie at residues 126–283 and 296–338; these read SQIG…GVPA and INVD…SSVL. A compositionally biased stretch (low complexity) spans 135–144; the sequence is PSSKLSSVAS. 2 stretches are compositionally biased toward gly residues: residues 145–157 and 194–209; these read NGGGAGGAGNGAG and GGGGGGGGGGGGGGGV. Lys213 carries the post-translational modification N6-acetyllysine. Over residues 221–230 the composition is skewed to polar residues; that stretch reads ATCQPFTPRT. Over residues 231-244 the composition is skewed to low complexity; it reads GSPSSSASACSPGG. Ser235 and Ser241 each carry phosphoserine. Residues 254 to 263 are compositionally biased toward basic and acidic residues; the sequence is EGKDDKKDPE. Residues 264-283 are compositionally biased toward gly residues; the sequence is AGGGGSSKGSGGASADGVPA. Low complexity predominate over residues 314 to 336; sequence GSDCGGSSSSSSGSGPSAPTSSS. The segment at 520–548 adopts a C2H2-type zinc-finger fold; it reads HICNWVSANGPCDKRFATSEELLSHLRTH. An Omega-N-methylarginine modification is found at Arg642.

The protein belongs to the Elbow/Noc family.

The protein resides in the nucleus. May function as a transcriptional repressor. The protein is Zinc finger protein 503 (Znf503) of Mus musculus (Mouse).